The sequence spans 504 residues: ATP synthase subunit alpha (504 aa).

An ATP-binding site is contributed by 169-176 (GDRQTGKT).

Belongs to the ATPase alpha/beta chains family. As to quaternary structure, F-type ATPases have 2 components, CF(1) - the catalytic core - and CF(0) - the membrane proton channel. CF(1) has five subunits: alpha(3), beta(3), gamma(1), delta(1), epsilon(1). CF(0) has three main subunits: a(1), b(2) and c(9-12). The alpha and beta chains form an alternating ring which encloses part of the gamma chain. CF(1) is attached to CF(0) by a central stalk formed by the gamma and epsilon chains, while a peripheral stalk is formed by the delta and b chains.

The protein localises to the cell membrane. It catalyses the reaction ATP + H2O + 4 H(+)(in) = ADP + phosphate + 5 H(+)(out). Its function is as follows. Produces ATP from ADP in the presence of a proton gradient across the membrane. The alpha chain is a regulatory subunit. This Clostridium kluyveri (strain NBRC 12016) protein is ATP synthase subunit alpha.